The following is a 528-amino-acid chain: Probable serine/threonine-protein kinase 380R (528 aa).

The interval 70–96 (VKIPKSKSPPKVKSPKRKKSPVRRRVS) is disordered. The segment covering 73–95 (PKSKSPPKVKSPKRKKSPVRRRV) has biased composition (basic residues). In terms of domain architecture, Protein kinase spans 156 to 507 (FTNVKAVGKG…LANVLIHKIF (352 aa)). Residues 162–170 (VGKGSFGTV) and Lys187 each bind ATP. Catalysis depends on Asp302, which acts as the Proton acceptor.

Belongs to the protein kinase superfamily. Ser/Thr protein kinase family.

The enzyme catalyses L-seryl-[protein] + ATP = O-phospho-L-seryl-[protein] + ADP + H(+). It catalyses the reaction L-threonyl-[protein] + ATP = O-phospho-L-threonyl-[protein] + ADP + H(+). In Invertebrate iridescent virus 6 (IIV-6), this protein is Probable serine/threonine-protein kinase 380R.